Reading from the N-terminus, the 462-residue chain is Probable peptidoglycan glycosyltransferase FtsW (462 aa).

Topologically, residues 1–63 are cytoplasmic; it reads MGCIVCSDGI…VRDGRKFDAP (63 aa). A helical transmembrane segment spans residues 64-84; sequence LLWMVVLMTAFGLLMIYSASV. Residues 85–97 lie on the Periplasmic side of the membrane; that stretch reads YLASKEGGDQFFY. The helical transmembrane segment at 98 to 118 threads the bilayer; the sequence is LTRQAGFVVAGLIASGFLWFL. Topologically, residues 119–125 are cytoplasmic; it reads CRMRTWR. The helical transmembrane segment at 126 to 146 threads the bilayer; that stretch reads RLVPWIFALSGLLLVAVLIAG. Residues 147 to 160 lie on the Periplasmic side of the membrane; sequence REINGATRWIPLGP. A helical membrane pass occupies residues 161-181; the sequence is LNFQPTELFKLAVILYLASLF. The Cytoplasmic portion of the chain corresponds to 182–227; the sequence is TRREEVLRSMESLGWQSIWRGTANLIMSATNPQARRETLEMYGRFR. 2 helical membrane passes run 228-248 and 249-269; these read AIIL…VQPD and FGSF…AGLP. The Cytoplasmic segment spans residues 270–271; it reads WK. A helical transmembrane segment spans residues 272–292; that stretch reads YFFVLVGSVLGGMVLMITAAP. Over 293-348 the chain is Periplasmic; it reads YRVQRVVAFLDPWKDPQGAGYQLTHSLMAIGRGEWFGMGLGASLSKRGFLPEAHTD. Residues 349-369 form a helical membrane-spanning segment; that stretch reads FIFAIIAEEFGFFGMCVLIFC. Topologically, residues 370-386 are cytoplasmic; sequence YGWLVVRAFSIGKQSRD. The chain crosses the membrane as a helical span at residues 387 to 409; it reads LGLTFNAYIASGIGIWIGIQSFF. At 410–424 the chain is on the periplasmic side; sequence NIGVNIGALPTKGLT. The helical transmembrane segment at 425–445 threads the bilayer; sequence LPLMSYGGSSVFFMLISMMLL. Residues 446–462 are Cytoplasmic-facing; it reads LRIDYENRRKMRGYRVE.

Belongs to the SEDS family. FtsW subfamily.

It localises to the cell inner membrane. It catalyses the reaction [GlcNAc-(1-&gt;4)-Mur2Ac(oyl-L-Ala-gamma-D-Glu-L-Lys-D-Ala-D-Ala)](n)-di-trans,octa-cis-undecaprenyl diphosphate + beta-D-GlcNAc-(1-&gt;4)-Mur2Ac(oyl-L-Ala-gamma-D-Glu-L-Lys-D-Ala-D-Ala)-di-trans,octa-cis-undecaprenyl diphosphate = [GlcNAc-(1-&gt;4)-Mur2Ac(oyl-L-Ala-gamma-D-Glu-L-Lys-D-Ala-D-Ala)](n+1)-di-trans,octa-cis-undecaprenyl diphosphate + di-trans,octa-cis-undecaprenyl diphosphate + H(+). Its pathway is cell wall biogenesis; peptidoglycan biosynthesis. Functionally, peptidoglycan polymerase that is essential for cell division. The protein is Probable peptidoglycan glycosyltransferase FtsW of Neisseria gonorrhoeae (strain NCCP11945).